The following is a 324-amino-acid chain: Short chain dehydrogenase/reductase dmxR8 (324 aa).

NADP(+) contacts are provided by Leu33, Lys58, Asp83, and Asn110. Ser163 functions as the Proton donor in the catalytic mechanism. Positions 200 and 204 each coordinate NADP(+). The active-site Proton acceptor is the Tyr200. Lys204 functions as the Lowers pKa of active site Tyr in the catalytic mechanism.

It belongs to the short-chain dehydrogenases/reductases (SDR) family.

Its pathway is secondary metabolite biosynthesis. Its function is as follows. Short chain dehydrogenase; part of the gene cluster that mediates the biosynthesis of the dimeric xanthones cryptosporioptides. The pathway begins with the synthesis of atrochrysone thioester by the polyketide synthase dmx-nrPKS. The atrochrysone carboxyl ACP thioesterase dmxR1 then breaks the thioester bond and releases the atrochrysone carboxylic acid from dmx-nrPKS. Atrochrysone carboxylic acid is decarboxylated by the decarboxylase dmxR15, and oxidized by the anthrone oxygenase dmxR16 to yield emodin. Emodin is then reduced to emodin hydroquinone by the oxidoreductase dmxR7. A-ring reduction by the short chain dehydrogenase dmxR18, dehydration by the scytalone dehydratase-like protein dmxR17 and probable spontaneous re-oxidation, results in overall deoxygenation to chrysophanol. Baeyer-Villiger oxidation by the Baeyer-Villiger monooxygenase (BVMO) dmxR6 then yields monodictylactone in equilibrium with monodictyphenone. In the case of the cryptosporioptides biosynthesis, monodictylactone is reduced at C-12 to an alcohol (by the short chain dehydrogenases dmxR12 or dmxR8) and hydroxylated at C-5 by dmxR9, yielding the electron-rich aromatic which could eliminate H(2)O to form the ortho-quinonemethide, followed by tautomerisation to paraquinone and complete the formal reduction to produce the 10-methylgroup. Conjugate addition of C-4a-OH to the resulting paraquinone by the monooxygenase dmxR10 then gives cyclohexadienone, which is then reduced at C-5 by the short chain dehydrogenase dmxR3 to give the dihydroxanthone. The 6,7-epoxide in the cryptosporioptides could be introduced by the cytochrome P450 monooxygenase dmxL3. The highly reducing PKS dmxL2 manufactures butyrate, which is further carboxylated by dmxL1 to form ethylmalonate. It is not yet clear whether the carboxylation occurs while the butyrate is attached to the ACP of dmxL2, but this unusual fungal metabolite could then be esterified to O-5 by the O-acetyltransferase dmxR13. Finally, dimerization performed by dmxR5 gives the observed dimers cryptosporioptides A, B and C as the final products of the pathway. The chain is Short chain dehydrogenase/reductase dmxR8 from Cryptosporiopsis sp. (strain 8999).